The chain runs to 354 residues: Phosphate acyltransferase (354 aa).

This sequence belongs to the PlsX family. As to quaternary structure, homodimer. Probably interacts with PlsY.

The protein resides in the cytoplasm. The enzyme catalyses a fatty acyl-[ACP] + phosphate = an acyl phosphate + holo-[ACP]. It functions in the pathway lipid metabolism; phospholipid metabolism. Its function is as follows. Catalyzes the reversible formation of acyl-phosphate (acyl-PO(4)) from acyl-[acyl-carrier-protein] (acyl-ACP). This enzyme utilizes acyl-ACP as fatty acyl donor, but not acyl-CoA. In Nitrobacter hamburgensis (strain DSM 10229 / NCIMB 13809 / X14), this protein is Phosphate acyltransferase.